The chain runs to 130 residues: Small ribosomal subunit protein uS9 (130 aa).

The protein belongs to the universal ribosomal protein uS9 family.

The sequence is that of Small ribosomal subunit protein uS9 from Albidiferax ferrireducens (strain ATCC BAA-621 / DSM 15236 / T118) (Rhodoferax ferrireducens).